A 329-amino-acid polypeptide reads, in one-letter code: Acetyl-coenzyme A carboxylase carboxyl transferase subunit alpha (329 aa).

The CoA carboxyltransferase C-terminal domain occupies 40–294 (QLETLAARRR…KESLIRNLRE (255 aa)).

It belongs to the AccA family. In terms of assembly, acetyl-CoA carboxylase is a heterohexamer composed of biotin carboxyl carrier protein (AccB), biotin carboxylase (AccC) and two subunits each of ACCase subunit alpha (AccA) and ACCase subunit beta (AccD).

It localises to the cytoplasm. It catalyses the reaction N(6)-carboxybiotinyl-L-lysyl-[protein] + acetyl-CoA = N(6)-biotinyl-L-lysyl-[protein] + malonyl-CoA. The protein operates within lipid metabolism; malonyl-CoA biosynthesis; malonyl-CoA from acetyl-CoA: step 1/1. Its function is as follows. Component of the acetyl coenzyme A carboxylase (ACC) complex. First, biotin carboxylase catalyzes the carboxylation of biotin on its carrier protein (BCCP) and then the CO(2) group is transferred by the carboxyltransferase to acetyl-CoA to form malonyl-CoA. The protein is Acetyl-coenzyme A carboxylase carboxyl transferase subunit alpha of Prochlorococcus marinus (strain MIT 9211).